We begin with the raw amino-acid sequence, 296 residues long: Cytidine deaminase (296 aa).

CMP/dCMP-type deaminase domains are found at residues 47–167 (ELNE…FGPS) and 186–296 (DSND…VEPE). 88 to 90 (NIE) is a substrate binding site. Histidine 101 provides a ligand contact to Zn(2+). The Proton donor role is filled by glutamate 103. Zn(2+)-binding residues include cysteine 128 and cysteine 131.

This sequence belongs to the cytidine and deoxycytidylate deaminase family. In terms of assembly, homodimer. The cofactor is Zn(2+).

It carries out the reaction cytidine + H2O + H(+) = uridine + NH4(+). The enzyme catalyses 2'-deoxycytidine + H2O + H(+) = 2'-deoxyuridine + NH4(+). Its function is as follows. This enzyme scavenges exogenous and endogenous cytidine and 2'-deoxycytidine for UMP synthesis. This Shewanella pealeana (strain ATCC 700345 / ANG-SQ1) protein is Cytidine deaminase.